Reading from the N-terminus, the 93-residue chain is Red pigment-concentrating hormone (93 aa).

The N-terminal stretch at 1–21 (MVRAVVATLLVVLVVASCVSA) is a signal peptide. A Pyrrolidone carboxylic acid modification is found at Gln-22. Residue Trp-29 is modified to Tryptophan amide. The propeptide occupies 33–93 (AAAGGEGTGM…VQCQDEEYLG (61 aa)). Residues 34–56 (AAGGEGTGMHPPAGAVVPPPSSL) are disordered.

Belongs to the AKH/HRTH/RPCH family. Strongly expressed in the eyestalk and weakly in brain. Not expressed in other tissues tested.

Its subcellular location is the secreted. In terms of biological role, this hormone adapts the animal to light backgrounds by stimulating concentration of the pigment of its red body-chromatophores. In Penaeus monodon (Giant tiger prawn), this protein is Red pigment-concentrating hormone.